A 330-amino-acid chain; its full sequence is MKTAYIVKQRQISFVKSHFSRQLEEKLGLIEVQAPILSRVGDGTQDNLSGCEKAVQVKVKTLPDAQFEVVHSLAKWKRQTLGQHDFSAGEGLYTHMKALRPDEDRLTAIHSVYVDQWDWERVMGDGERHVGTLKSTVEAIYAGIKATETAVSKEFGLTPFLPDTIHFIHSQDLLSRFPDLDAKGRERAIAKELGAVFLIGIGGKLSDGKRHDVRAPDYDDWSTSGESERAGLNGDILVWNPILEDAFELSSMGIRVDADALKRQLAVTGDEDRLKLEWHQALLRGEMPQTIGGGIGQSRLTMLLLQLSHIGQVQCGVWPQQVRASVDSLL.

It belongs to the class-II aminoacyl-tRNA synthetase family. AsnA subfamily.

The protein localises to the cytoplasm. It catalyses the reaction L-aspartate + NH4(+) + ATP = L-asparagine + AMP + diphosphate + H(+). The protein operates within amino-acid biosynthesis; L-asparagine biosynthesis; L-asparagine from L-aspartate (ammonia route): step 1/1. The sequence is that of Aspartate--ammonia ligase from Enterobacter sp. (strain 638).